The sequence spans 460 residues: Bifunctional protein GlmU (460 aa).

The interval 1–232 is pyrophosphorylase; sequence MALNVVILAA…AIEVEGANNR (232 aa). Residues 8–11, Lys-22, Gln-73, 78–79, 100–102, Gly-137, Glu-157, Asn-172, and Asn-230 each bind UDP-N-acetyl-alpha-D-glucosamine; these read LAAG, GT, and YGD. Asp-102 contributes to the Mg(2+) binding site. Asn-230 lines the Mg(2+) pocket. Residues 233–253 form a linker region; the sequence is VQLAQLERAYQAREAEKLMLA. The segment at 254–460 is N-acetyltransferase; sequence GANLRDPSRI…GWQRPVKIKK (207 aa). Positions 336 and 354 each coordinate UDP-N-acetyl-alpha-D-glucosamine. The Proton acceptor role is filled by His-366. UDP-N-acetyl-alpha-D-glucosamine is bound by residues Tyr-369 and Asn-380. Acetyl-CoA is bound by residues Ala-383, 389–390, Ser-408, Ala-426, and Arg-443; that span reads NY.

The protein in the N-terminal section; belongs to the N-acetylglucosamine-1-phosphate uridyltransferase family. In the C-terminal section; belongs to the transferase hexapeptide repeat family. As to quaternary structure, homotrimer. The cofactor is Mg(2+).

It localises to the cytoplasm. The catalysed reaction is alpha-D-glucosamine 1-phosphate + acetyl-CoA = N-acetyl-alpha-D-glucosamine 1-phosphate + CoA + H(+). The enzyme catalyses N-acetyl-alpha-D-glucosamine 1-phosphate + UTP + H(+) = UDP-N-acetyl-alpha-D-glucosamine + diphosphate. It participates in nucleotide-sugar biosynthesis; UDP-N-acetyl-alpha-D-glucosamine biosynthesis; N-acetyl-alpha-D-glucosamine 1-phosphate from alpha-D-glucosamine 6-phosphate (route II): step 2/2. The protein operates within nucleotide-sugar biosynthesis; UDP-N-acetyl-alpha-D-glucosamine biosynthesis; UDP-N-acetyl-alpha-D-glucosamine from N-acetyl-alpha-D-glucosamine 1-phosphate: step 1/1. It functions in the pathway bacterial outer membrane biogenesis; LPS lipid A biosynthesis. Its function is as follows. Catalyzes the last two sequential reactions in the de novo biosynthetic pathway for UDP-N-acetylglucosamine (UDP-GlcNAc). The C-terminal domain catalyzes the transfer of acetyl group from acetyl coenzyme A to glucosamine-1-phosphate (GlcN-1-P) to produce N-acetylglucosamine-1-phosphate (GlcNAc-1-P), which is converted into UDP-GlcNAc by the transfer of uridine 5-monophosphate (from uridine 5-triphosphate), a reaction catalyzed by the N-terminal domain. This is Bifunctional protein GlmU from Shewanella baltica (strain OS155 / ATCC BAA-1091).